Reading from the N-terminus, the 396-residue chain is S-adenosylmethionine synthase (396 aa).

Position 16 (histidine 16) interacts with ATP. Mg(2+) is bound at residue aspartate 18. Residue glutamate 44 participates in K(+) binding. The L-methionine site is built by glutamate 57 and glutamine 100. The interval 100 to 110 (QSQDIARGVDN) is flexible loop. Residues 162 to 164 (DGK), 228 to 229 (RF), aspartate 237, 243 to 244 (RK), alanine 260, and lysine 264 contribute to the ATP site. Aspartate 237 is a binding site for L-methionine. Position 268 (lysine 268) interacts with L-methionine.

The protein belongs to the AdoMet synthase family. As to quaternary structure, homotetramer; dimer of dimers. Mg(2+) serves as cofactor. Requires K(+) as cofactor.

Its subcellular location is the cytoplasm. The enzyme catalyses L-methionine + ATP + H2O = S-adenosyl-L-methionine + phosphate + diphosphate. Its pathway is amino-acid biosynthesis; S-adenosyl-L-methionine biosynthesis; S-adenosyl-L-methionine from L-methionine: step 1/1. Functionally, catalyzes the formation of S-adenosylmethionine (AdoMet) from methionine and ATP. The overall synthetic reaction is composed of two sequential steps, AdoMet formation and the subsequent tripolyphosphate hydrolysis which occurs prior to release of AdoMet from the enzyme. This is S-adenosylmethionine synthase from Myxococcus xanthus (strain DK1622).